We begin with the raw amino-acid sequence, 108 residues long: Thiosulfate sulfurtransferase GlpE (108 aa).

The region spanning 17–105 is the Rhodanese domain; the sequence is QEKEAVLVDI…WQRQFPAEVA (89 aa). Cys-65 serves as the catalytic Cysteine persulfide intermediate.

Belongs to the GlpE family.

It is found in the cytoplasm. The enzyme catalyses thiosulfate + hydrogen cyanide = thiocyanate + sulfite + 2 H(+). The catalysed reaction is thiosulfate + [thioredoxin]-dithiol = [thioredoxin]-disulfide + hydrogen sulfide + sulfite + 2 H(+). Its function is as follows. Transferase that catalyzes the transfer of sulfur from thiosulfate to thiophilic acceptors such as cyanide or dithiols. May function in a CysM-independent thiosulfate assimilation pathway by catalyzing the conversion of thiosulfate to sulfite, which can then be used for L-cysteine biosynthesis. The chain is Thiosulfate sulfurtransferase GlpE from Escherichia coli O127:H6 (strain E2348/69 / EPEC).